Reading from the N-terminus, the 552-residue chain is ATP synthase subunit alpha (552 aa).

Residue 173 to 180 (GDRQTGKT) coordinates ATP. Residues 526 to 552 (ASPLDPSAVRKESIPVHRAPARTDDEG) are disordered. The span at 533–552 (AVRKESIPVHRAPARTDDEG) shows a compositional bias: basic and acidic residues.

It belongs to the ATPase alpha/beta chains family. As to quaternary structure, F-type ATPases have 2 components, CF(1) - the catalytic core - and CF(0) - the membrane proton channel. CF(1) has five subunits: alpha(3), beta(3), gamma(1), delta(1), epsilon(1). CF(0) has three main subunits: a(1), b(2) and c(9-12). The alpha and beta chains form an alternating ring which encloses part of the gamma chain. CF(1) is attached to CF(0) by a central stalk formed by the gamma and epsilon chains, while a peripheral stalk is formed by the delta and b chains.

Its subcellular location is the cell membrane. The catalysed reaction is ATP + H2O + 4 H(+)(in) = ADP + phosphate + 5 H(+)(out). Its function is as follows. Produces ATP from ADP in the presence of a proton gradient across the membrane. The alpha chain is a regulatory subunit. This Frankia alni (strain DSM 45986 / CECT 9034 / ACN14a) protein is ATP synthase subunit alpha.